A 49-amino-acid polypeptide reads, in one-letter code: Large ribosomal subunit protein bL33 (49 aa).

This sequence belongs to the bacterial ribosomal protein bL33 family.

This is Large ribosomal subunit protein bL33 from Fervidobacterium nodosum (strain ATCC 35602 / DSM 5306 / Rt17-B1).